The sequence spans 469 residues: Probable ribonuclease FAU-1 (469 aa).

The protein belongs to the FAU-1 family.

Probable RNase involved in rRNA stability through maturation and/or degradation of precursor rRNAs. Binds to RNA in loop regions with AU-rich sequences. The polypeptide is Probable ribonuclease FAU-1 (Pyrococcus horikoshii (strain ATCC 700860 / DSM 12428 / JCM 9974 / NBRC 100139 / OT-3)).